We begin with the raw amino-acid sequence, 160 residues long: MAPK regulated corepressor interacting protein 2 (160 aa).

Position 1 is an N-acetylmethionine (M1). The disordered stretch occupies residues 1-22; the sequence is MYTITKGPSKLVAQRRTGPTQQ. At R35 the chain carries Omega-N-methylarginine. Residues 43–64 form a disordered region; the sequence is LPAHLQPSAQTQGPWPLASSGP. S61 is modified (phosphoserine). An Omega-N-methylarginine modification is found at R65. A Phosphoserine modification is found at S82.

The protein belongs to the MCRIP family. Interacts with DDX6. Interacts with MCRIP1.

It localises to the cytoplasm. Its subcellular location is the stress granule. The protein localises to the nucleus. This Mus musculus (Mouse) protein is MAPK regulated corepressor interacting protein 2 (Mcrip2).